The sequence spans 765 residues: Palmitoyltransferase ZDHHC8 (765 aa).

Over 1 to 13 (MPRSPGTRLKPAK) the chain is Cytoplasmic. The helical transmembrane segment at 14-34 (YIPVATAAALLVGSSTLFFVF) threads the bilayer. At 35–52 (TCPWLTRAVSPAVPVYNG) the chain is on the lumenal side. Residues 53–73 (IIFLFVLANFSMATFMDPGVF) traverse the membrane as a helical segment. Over 74-148 (PRADEDEDKE…NCIGRRNYRY (75 aa)) the chain is Cytoplasmic. One can recognise a DHHC domain in the interval 104 to 154 (KWCATCHFYRPPRCSHCSVCDNCVEDFDHHCPWVNNCIGRRNYRYFFLFLL). Catalysis depends on C134, which acts as the S-palmitoyl cysteine intermediate. Residues 149–169 (FFLFLLSLSAHMVGVVAFGLV) traverse the membrane as a helical segment. Over 170–190 (YVLNHAEGLGAAHTTITMAVM) the chain is Lumenal. A helical transmembrane segment spans residues 191-211 (CVAGLFFIPVIGLTGFHVVLV). At 212–765 (TRGRTTNEHV…VGGTTYEISV (554 aa)) the chain is on the cytoplasmic side. Residues 290–386 (LKAGLGRSKS…PGPDSLTLGE (97 aa)) form a disordered region. Residues 301 to 311 (GSLDRLDEKPL) show a composition bias toward basic and acidic residues. Residues 333–348 (PRPSSAESALSAQRTS) show a composition bias toward polar residues. The residue at position 337 (S337) is a Phosphoserine. At R441 the chain carries Omega-N-methylarginine. The disordered stretch occupies residues 447-542 (ALQPLRSEGG…PREPSPVRYD (96 aa)). S606 and S627 each carry phosphoserine. Residues 630 to 747 (SLSSAVSRAP…PGPSASPARH (118 aa)) form a disordered region. Positions 639–655 (PRTSSSSLQADLANNNA) are enriched in polar residues. Over residues 671 to 680 (QGPPSPPSTP) the composition is skewed to pro residues. Phosphoserine is present on residues S675, S682, S725, and S743.

This sequence belongs to the DHHC palmitoyltransferase family. ERF2/ZDHHC9 subfamily.

The protein localises to the golgi apparatus membrane. It localises to the mitochondrion membrane. It carries out the reaction L-cysteinyl-[protein] + hexadecanoyl-CoA = S-hexadecanoyl-L-cysteinyl-[protein] + CoA. In terms of biological role, palmitoyltransferase that catalyzes the addition of palmitate onto various protein substrates and therefore functions in several unrelated biological processes. Through the palmitoylation of ABCA1 regulates the localization of the transporter to the plasma membrane and thereby regulates its function in cholesterol and phospholipid efflux. Could also pamitoylate the D(2) dopamine receptor DRD2 and regulate its stability and localization to the plasma membrane. Could also play a role in glutamatergic transmission. The sequence is that of Palmitoyltransferase ZDHHC8 from Canis lupus familiaris (Dog).